The chain runs to 616 residues: Chaperone protein HscA (616 aa).

It belongs to the heat shock protein 70 family.

Functionally, chaperone involved in the maturation of iron-sulfur cluster-containing proteins. Has a low intrinsic ATPase activity which is markedly stimulated by HscB. Involved in the maturation of IscU. This chain is Chaperone protein HscA, found in Salmonella arizonae (strain ATCC BAA-731 / CDC346-86 / RSK2980).